A 438-amino-acid polypeptide reads, in one-letter code: ATP phosphoribosyltransferase regulatory subunit (438 aa).

The protein belongs to the class-II aminoacyl-tRNA synthetase family. HisZ subfamily. Heteromultimer composed of HisG and HisZ subunits.

Its subcellular location is the cytoplasm. It functions in the pathway amino-acid biosynthesis; L-histidine biosynthesis; L-histidine from 5-phospho-alpha-D-ribose 1-diphosphate: step 1/9. In terms of biological role, required for the first step of histidine biosynthesis. May allow the feedback regulation of ATP phosphoribosyltransferase activity by histidine. This chain is ATP phosphoribosyltransferase regulatory subunit, found in Geobacter sulfurreducens (strain ATCC 51573 / DSM 12127 / PCA).